We begin with the raw amino-acid sequence, 319 residues long: Cobalamin biosynthesis protein CbiB (319 aa).

The next 4 membrane-spanning stretches (helical) occupy residues 56–76, 82–102, 153–173, and 296–316; these read VMWV…LALA, WFGW…RSLA, VDGI…LAMA, and LMWV…CGLS.

Belongs to the CobD/CbiB family.

Its subcellular location is the cell membrane. It participates in cofactor biosynthesis; adenosylcobalamin biosynthesis. In terms of biological role, converts cobyric acid to cobinamide by the addition of aminopropanol on the F carboxylic group. However, the true cosubstrate could be (R)-1-amino-2-propanol O-2-phosphate, leading to cobinamide phosphate. The chain is Cobalamin biosynthesis protein CbiB from Salmonella paratyphi A (strain ATCC 9150 / SARB42).